The chain runs to 279 residues: Putative polysaccharide deacetylase YxkH (279 aa).

The N-terminal stretch at 1 to 19 (MKRLFLSIFLLGSCLALAA) is a signal peptide. C20 is lipidated: N-palmitoyl cysteine. C20 carries the S-diacylglycerol cysteine lipid modification. A disordered region spans residues 29–51 (QPMPKAEQKKPEKKAVQVQKKED). Over residues 34–51 (AEQKKPEKKAVQVQKKED) the composition is skewed to basic and acidic residues. Residues 119 to 279 (KCVLITFDDG…AFGAYIESMK (161 aa)) form the NodB homology domain.

The protein belongs to the polysaccharide deacetylase family.

The protein localises to the cell membrane. The chain is Putative polysaccharide deacetylase YxkH (yxkH) from Bacillus subtilis (strain 168).